A 427-amino-acid polypeptide reads, in one-letter code: MQKNITKVSDTEQELEIILTAEEYGTEYNQELDEAKRTIQVKGFRKGHVPTGLIKKLAGPAIEASVAEKMASKHFGTIVDEEKIKPASRAQIESVSYEGDELKIKLSYEIHPVFELNNYSDYTFTKARYTITDEDVQKEIDLILKGHGSLATVDEAALGTDTVIGDVEKLDAAGEPEEGGKTENHHFNLEYLPEDNPFRISLEGAKAGETVNVATTQKDPNTPVVSYRITVKEVKRLELPELTDDLVKEITRQRFETVADFTADVRIQLEEHFGMKSDEELLESISSKLIEENPVSTPKSMVASFANMLVENAKRQFGGKFPKGFDESQFTESIIPNAEKHARWLLISQKIAELNNVEVTDEDIKTYAEKEAEKSTPEQKEEIMSTYQSTEFRDYIADTIIKDKIYDIIKSQVTITEEPTPVPVHKA.

The region spanning 160-240 (TDTVIGDVEK…VKEVKRLELP (81 aa)) is the PPIase FKBP-type domain.

It belongs to the FKBP-type PPIase family. Tig subfamily.

The protein resides in the cytoplasm. It carries out the reaction [protein]-peptidylproline (omega=180) = [protein]-peptidylproline (omega=0). In terms of biological role, involved in protein export. Acts as a chaperone by maintaining the newly synthesized protein in an open conformation. Functions as a peptidyl-prolyl cis-trans isomerase. The chain is Trigger factor from Chlorobium phaeobacteroides (strain DSM 266 / SMG 266 / 2430).